We begin with the raw amino-acid sequence, 191 residues long: Large ribosomal subunit protein bL9 (191 aa).

The segment at 150–191 (EAERQAKGESLTSADAIYGVDEDALRPEDFFDPDADRDGDDE) is disordered. Residues 179-191 (FFDPDADRDGDDE) are compositionally biased toward acidic residues.

It belongs to the bacterial ribosomal protein bL9 family.

Binds to the 23S rRNA. In Allorhizobium ampelinum (strain ATCC BAA-846 / DSM 112012 / S4) (Agrobacterium vitis (strain S4)), this protein is Large ribosomal subunit protein bL9.